Consider the following 699-residue polypeptide: Chitinase A1 (699 aa).

Positions 1-41 (MINLNKHTAFKKTAKFFLGLSLLLSVIVPSFALQPATAEAA) are cleaved as a signal peptide. In terms of domain architecture, GH18 spans 44-454 (YKIVGYYPSW…NKLKADLPTG (411 aa)). Chitin is bound by residues 135-136 (DQ) and 162-165 (GGWT). Glu204 acts as the Proton donor in catalysis. Residues Tyr205, 277 to 280 (MTYD), and Trp433 contribute to the chitin site. The tract at residues 449 to 471 (ADLPTGGTVPPVDTTAPSVPGNA) is disordered. Low complexity predominate over residues 452 to 465 (PTGGTVPPVDTTAP). 2 consecutive Fibronectin type-III domains span residues 467 to 553 (VPGN…TAQP) and 562 to 647 (APTN…TAAE).

It belongs to the glycosyl hydrolase 18 family. Chitinase class II subfamily.

The catalysed reaction is Random endo-hydrolysis of N-acetyl-beta-D-glucosaminide (1-&gt;4)-beta-linkages in chitin and chitodextrins.. The polypeptide is Chitinase A1 (chiA1) (Niallia circulans (Bacillus circulans)).